We begin with the raw amino-acid sequence, 156 residues long: Transcriptional repressor NrdR (156 aa).

The segment at 3–34 (CPFCGSMDTRVLDSRPTLDGAAIRRRRECISC) is a zinc-finger region. Residues 49-139 (VLVIKKDGRR…VYRDFREVDQ (91 aa)) enclose the ATP-cone domain.

Belongs to the NrdR family. It depends on Zn(2+) as a cofactor.

Its function is as follows. Negatively regulates transcription of bacterial ribonucleotide reductase nrd genes and operons by binding to NrdR-boxes. This is Transcriptional repressor NrdR from Thermotoga neapolitana (strain ATCC 49049 / DSM 4359 / NBRC 107923 / NS-E).